A 455-amino-acid polypeptide reads, in one-letter code: Hydroxymethylglutaryl-CoA synthase 2 (455 aa).

The active-site Proton donor/acceptor is the Glu-86. The active-site Acyl-thioester intermediate is Cys-120. (3S)-3-hydroxy-3-methylglutaryl-CoA contacts are provided by Cys-120, Thr-161, Ser-211, His-255, Lys-264, Asn-329, and Ser-363. The active-site Proton donor/acceptor is His-255.

The protein belongs to the thiolase-like superfamily. HMG-CoA synthase family.

The catalysed reaction is acetoacetyl-CoA + acetyl-CoA + H2O = (3S)-3-hydroxy-3-methylglutaryl-CoA + CoA + H(+). Its pathway is metabolic intermediate biosynthesis; (R)-mevalonate biosynthesis; (R)-mevalonate from acetyl-CoA: step 2/3. Its function is as follows. This enzyme condenses acetyl-CoA with acetoacetyl-CoA to form HMG-CoA, which is the substrate for HMG-CoA reductase. The polypeptide is Hydroxymethylglutaryl-CoA synthase 2 (HMGCS-2) (Blattella germanica (German cockroach)).